The sequence spans 223 residues: Ribonuclease 3 (223 aa).

The 123-residue stretch at 3–125 (LEKLQKKLGH…LIAAIYLDAG (123 aa)) folds into the RNase III domain. Residue Glu-38 coordinates Mg(2+). Residue Asp-42 is part of the active site. Mg(2+) contacts are provided by Asp-111 and Glu-114. Glu-114 is a catalytic residue. The region spanning 152–222 (DPKTRLQEFL…AQQAIEKLKI (71 aa)) is the DRBM domain.

It belongs to the ribonuclease III family. Homodimer. It depends on Mg(2+) as a cofactor.

The protein resides in the cytoplasm. It catalyses the reaction Endonucleolytic cleavage to 5'-phosphomonoester.. Digests double-stranded RNA. Involved in the processing of primary rRNA transcript to yield the immediate precursors to the large and small rRNAs (23S and 16S). Processes some mRNAs, and tRNAs when they are encoded in the rRNA operon. Processes pre-crRNA and tracrRNA of type II CRISPR loci if present in the organism. The sequence is that of Ribonuclease 3 from Histophilus somni (strain 2336) (Haemophilus somnus).